Here is a 1435-residue protein sequence, read N- to C-terminus: Gag-Pol polyprotein (1435 aa).

Residue Gly-2 is the site of N-myristoyl glycine; by host attachment. Residues 7 to 31 (VLSGGKLDRWEKIRLRPGGKKKYKL) are interaction with Gp41. Positions 8 to 43 (LSGGKLDRWEKIRLRPGGKKKYKLKHIVWASRELER) are interaction with host CALM1. Positions 12–19 (KLDRWEKI) are interaction with host AP3D1. Residues 14-33 (DRWEKIRLRPGGKKKYKLKH) are interaction with membrane phosphatidylinositol 4,5-bisphosphate and RNA. The Nuclear export signal motif lies at 16-22 (WEKIRLR). Positions 26 to 32 (KKKYKLK) match the Nuclear localization signal motif. The tract at residues 73–77 (EECRS) is interaction with membrane phosphatidylinositol 4,5-bisphosphate. Residues 107 to 128 (EQNKSKKKAQQAAADTGHSSQV) form a disordered region. Tyr-132 carries the phosphotyrosine; by host modification. The segment at 189-227 (NTVGGHQAAMQMLKETINEEAAEWDRVHPVHAGPIAPGQ) is interaction with human PPIA/CYPA and NUP153. A dimerization/Multimerization of capsid protein p24 region spans residues 277 to 363 (YSPTSILDIR…GGPGHKARVL (87 aa)). 2 consecutive CCHC-type zinc fingers follow at residues 390–407 (VKCF…NCRA) and 411–428 (KGCW…DCTE). Residues 449–481 (SSEQTRANSPTRRELQVWGRDNNSPSEAGADRQ) are disordered. Residues 489–493 (PQITL) form a dimerization of protease region. Positions 508 to 577 (KEALLDTGAD…TPVNIIGRNL (70 aa)) constitute a Peptidase A2 domain. Asp-513 serves as the catalytic For protease activity; shared with dimeric partner. 2 dimerization of protease regions span residues 537–543 (GIGGFIK) and 576–588 (NLLT…LNFP). In terms of domain architecture, Reverse transcriptase spans 631 to 821 (EGKISKIGPE…PPFLWMGYEL (191 aa)). 3 residues coordinate Mg(2+): Asp-697, Asp-772, and Asp-773. The segment at 814–822 (FLWMGYELH) is RT 'primer grip'. Residues 985-1001 (WETWWTEYWQATWIPEW) carry the Tryptophan repeat motif motif. The 124-residue stretch at 1021–1144 (IVGAETFYVD…VDKLVSAGIR (124 aa)) folds into the RNase H type-1 domain. Residues Asp-1030, Glu-1065, Asp-1085, and Asp-1136 each contribute to the Mg(2+) site. Residues 1150 to 1191 (DGIDKAQDEHEKYHSNWRAMASDFNLPPVVAKEIVASCDKCQ) form an Integrase-type zinc finger. 4 residues coordinate Zn(2+): His-1159, His-1163, Cys-1187, and Cys-1190. The region spanning 1201–1351 (VDCSPGIWQL…SAGERIVDII (151 aa)) is the Integrase catalytic domain. Asp-1211, Asp-1263, and Glu-1299 together coordinate Mg(2+). The integrase-type DNA-binding region spans 1370-1417 (FRVYYRDSRNPLWKGPAKLLWKGEGAVVIQDNSDIKVVPRRKAKIIRD).

In terms of assembly, homotrimer; further assembles as hexamers of trimers. Interacts with gp41 (via C-terminus). Interacts with host CALM1; this interaction induces a conformational change in the Matrix protein, triggering exposure of the myristate group. Interacts with host AP3D1; this interaction allows the polyprotein trafficking to multivesicular bodies during virus assembly. Part of the pre-integration complex (PIC) which is composed of viral genome, matrix protein, Vpr and integrase. As to quaternary structure, homodimer; the homodimer further multimerizes as homohexamers or homopentamers. Interacts with human PPIA/CYPA; This interaction stabilizes the capsid. Interacts with human NUP153. Interacts with host PDZD8; this interaction stabilizes the capsid. Interacts with monkey TRIM5; this interaction destabilizes the capsid. Homodimer, whose active site consists of two apposed aspartic acid residues. In terms of assembly, heterodimer of p66 RT and p51 RT (RT p66/p51). Heterodimerization of RT is essential for DNA polymerase activity. The overall folding of the subdomains is similar in p66 RT and p51 RT but the spatial arrangements of the subdomains are dramatically different. As to quaternary structure, homotetramer; may further associate as a homohexadecamer. Part of the pre-integration complex (PIC) which is composed of viral genome, matrix protein, Vpr and integrase. Interacts with human SMARCB1/INI1 and human PSIP1/LEDGF isoform 1. Interacts with human KPNA3; this interaction might play a role in nuclear import of the pre-integration complex. Interacts with human NUP153; this interaction might play a role in nuclear import of the pre-integration complex. It depends on Mg(2+) as a cofactor. Specific enzymatic cleavages by the viral protease yield mature proteins. The protease is released by autocatalytic cleavage. The polyprotein is cleaved during and after budding, this process is termed maturation. Proteolytic cleavage of p66 RT removes the RNase H domain to yield the p51 RT subunit. Nucleocapsid protein p7 might be further cleaved after virus entry. Post-translationally, tyrosine phosphorylated presumably in the virion by a host kinase. Phosphorylation is apparently not a major regulator of membrane association. In terms of processing, phosphorylated possibly by host MAPK1; this phosphorylation is necessary for Pin1-mediated virion uncoating. Methylated by host PRMT6, impairing its function by reducing RNA annealing and the initiation of reverse transcription.

The protein localises to the host cell membrane. It localises to the host endosome. It is found in the host multivesicular body. The protein resides in the virion membrane. Its subcellular location is the host nucleus. The protein localises to the host cytoplasm. It localises to the virion. The enzyme catalyses Specific for a P1 residue that is hydrophobic, and P1' variable, but often Pro.. It catalyses the reaction Endohydrolysis of RNA in RNA/DNA hybrids. Three different cleavage modes: 1. sequence-specific internal cleavage of RNA. Human immunodeficiency virus type 1 and Moloney murine leukemia virus enzymes prefer to cleave the RNA strand one nucleotide away from the RNA-DNA junction. 2. RNA 5'-end directed cleavage 13-19 nucleotides from the RNA end. 3. DNA 3'-end directed cleavage 15-20 nucleotides away from the primer terminus.. It carries out the reaction 3'-end directed exonucleolytic cleavage of viral RNA-DNA hybrid.. The catalysed reaction is DNA(n) + a 2'-deoxyribonucleoside 5'-triphosphate = DNA(n+1) + diphosphate. With respect to regulation, protease: The viral protease is inhibited by many synthetic protease inhibitors (PIs), such as amprenavir, atazanavir, indinavir, loprinavir, nelfinavir, ritonavir and saquinavir. Use of protease inhibitors in tritherapy regimens permit more ambitious therapeutic strategies. Reverse transcriptase/ribonuclease H: RT can be inhibited either by nucleoside RT inhibitors (NRTIs) or by non nucleoside RT inhibitors (NNRTIs). NRTIs act as chain terminators, whereas NNRTIs inhibit DNA polymerization by binding a small hydrophobic pocket near the RT active site and inducing an allosteric change in this region. Classical NRTIs are abacavir, adefovir (PMEA), didanosine (ddI), lamivudine (3TC), stavudine (d4T), tenofovir (PMPA), zalcitabine (ddC), and zidovudine (AZT). Classical NNRTIs are atevirdine (BHAP U-87201E), delavirdine, efavirenz (DMP-266), emivirine (I-EBU), and nevirapine (BI-RG-587). The tritherapies used as a basic effective treatment of AIDS associate two NRTIs and one NNRTI. Its function is as follows. Mediates, with Gag polyprotein, the essential events in virion assembly, including binding the plasma membrane, making the protein-protein interactions necessary to create spherical particles, recruiting the viral Env proteins, and packaging the genomic RNA via direct interactions with the RNA packaging sequence (Psi). Gag-Pol polyprotein may regulate its own translation, by the binding genomic RNA in the 5'-UTR. At low concentration, the polyprotein would promote translation, whereas at high concentration, the polyprotein would encapsidate genomic RNA and then shut off translation. Targets the polyprotein to the plasma membrane via a multipartite membrane-binding signal, that includes its myristoylated N-terminus. Matrix protein is part of the pre-integration complex. Implicated in the release from host cell mediated by Vpu. Binds to RNA. In terms of biological role, forms the conical core that encapsulates the genomic RNA-nucleocapsid complex in the virion. Most core are conical, with only 7% tubular. The core is constituted by capsid protein hexamer subunits. The core is disassembled soon after virion entry. Host restriction factors such as TRIM5-alpha or TRIMCyp bind retroviral capsids and cause premature capsid disassembly, leading to blocks in reverse transcription. Capsid restriction by TRIM5 is one of the factors which restricts HIV-1 to the human species. Host PIN1 apparently facilitates the virion uncoating. On the other hand, interactions with PDZD8 or CYPA stabilize the capsid. Functionally, encapsulates and protects viral dimeric unspliced genomic RNA (gRNA). Binds these RNAs through its zinc fingers. Acts as a nucleic acid chaperone which is involved in rearangement of nucleic acid secondary structure during gRNA retrotranscription. Also facilitates template switch leading to recombination. As part of the polyprotein, participates in gRNA dimerization, packaging, tRNA incorporation and virion assembly. Its function is as follows. Aspartyl protease that mediates proteolytic cleavages of Gag and Gag-Pol polyproteins during or shortly after the release of the virion from the plasma membrane. Cleavages take place as an ordered, step-wise cascade to yield mature proteins. This process is called maturation. Displays maximal activity during the budding process just prior to particle release from the cell. Also cleaves Nef and Vif, probably concomitantly with viral structural proteins on maturation of virus particles. Hydrolyzes host EIF4GI and PABP1 in order to shut off the capped cellular mRNA translation. The resulting inhibition of cellular protein synthesis serves to ensure maximal viral gene expression and to evade host immune response. Also mediates cleavage of host YTHDF3. Mediates cleavage of host CARD8, thereby activating the CARD8 inflammasome, leading to the clearance of latent HIV-1 in patient CD4(+) T-cells after viral reactivation; in contrast, HIV-1 can evade CARD8-sensing when its protease remains inactive in infected cells prior to viral budding. Multifunctional enzyme that converts the viral RNA genome into dsDNA in the cytoplasm, shortly after virus entry into the cell. This enzyme displays a DNA polymerase activity that can copy either DNA or RNA templates, and a ribonuclease H (RNase H) activity that cleaves the RNA strand of RNA-DNA heteroduplexes in a partially processive 3' to 5' endonucleasic mode. Conversion of viral genomic RNA into dsDNA requires many steps. A tRNA(3)-Lys binds to the primer-binding site (PBS) situated at the 5'-end of the viral RNA. RT uses the 3' end of the tRNA primer to perform a short round of RNA-dependent minus-strand DNA synthesis. The reading proceeds through the U5 region and ends after the repeated (R) region which is present at both ends of viral RNA. The portion of the RNA-DNA heteroduplex is digested by the RNase H, resulting in a ssDNA product attached to the tRNA primer. This ssDNA/tRNA hybridizes with the identical R region situated at the 3' end of viral RNA. This template exchange, known as minus-strand DNA strong stop transfer, can be either intra- or intermolecular. RT uses the 3' end of this newly synthesized short ssDNA to perform the RNA-dependent minus-strand DNA synthesis of the whole template. RNase H digests the RNA template except for two polypurine tracts (PPTs) situated at the 5'-end and near the center of the genome. It is not clear if both polymerase and RNase H activities are simultaneous. RNase H probably can proceed both in a polymerase-dependent (RNA cut into small fragments by the same RT performing DNA synthesis) and a polymerase-independent mode (cleavage of remaining RNA fragments by free RTs). Secondly, RT performs DNA-directed plus-strand DNA synthesis using the PPTs that have not been removed by RNase H as primers. PPTs and tRNA primers are then removed by RNase H. The 3' and 5' ssDNA PBS regions hybridize to form a circular dsDNA intermediate. Strand displacement synthesis by RT to the PBS and PPT ends produces a blunt ended, linear dsDNA copy of the viral genome that includes long terminal repeats (LTRs) at both ends. In terms of biological role, catalyzes viral DNA integration into the host chromosome, by performing a series of DNA cutting and joining reactions. This enzyme activity takes place after virion entry into a cell and reverse transcription of the RNA genome in dsDNA. The first step in the integration process is 3' processing. This step requires a complex comprising the viral genome, matrix protein, Vpr and integrase. This complex is called the pre-integration complex (PIC). The integrase protein removes 2 nucleotides from each 3' end of the viral DNA, leaving recessed CA OH's at the 3' ends. In the second step, the PIC enters cell nucleus. This process is mediated through integrase and Vpr proteins, and allows the virus to infect a non dividing cell. This ability to enter the nucleus is specific of lentiviruses, other retroviruses cannot and rely on cell division to access cell chromosomes. In the third step, termed strand transfer, the integrase protein joins the previously processed 3' ends to the 5' ends of strands of target cellular DNA at the site of integration. The 5'-ends are produced by integrase-catalyzed staggered cuts, 5 bp apart. A Y-shaped, gapped, recombination intermediate results, with the 5'-ends of the viral DNA strands and the 3' ends of target DNA strands remaining unjoined, flanking a gap of 5 bp. The last step is viral DNA integration into host chromosome. This involves host DNA repair synthesis in which the 5 bp gaps between the unjoined strands are filled in and then ligated. Since this process occurs at both cuts flanking the HIV genome, a 5 bp duplication of host DNA is produced at the ends of HIV-1 integration. Alternatively, Integrase may catalyze the excision of viral DNA just after strand transfer, this is termed disintegration. The protein is Gag-Pol polyprotein (gag-pol) of Human immunodeficiency virus type 1 group M subtype B (isolate LW123) (HIV-1).